Here is a 265-residue protein sequence, read N- to C-terminus: Glutamate racemase (265 aa).

Residues Asp10–Ser11 and Tyr42–Gly43 each bind substrate. The active-site Proton donor/acceptor is the Cys73. Asn74–Thr75 is a substrate binding site. Residue Cys180 is the Proton donor/acceptor of the active site. Thr181–His182 contacts substrate.

The protein belongs to the aspartate/glutamate racemases family.

The catalysed reaction is L-glutamate = D-glutamate. It participates in cell wall biogenesis; peptidoglycan biosynthesis. Provides the (R)-glutamate required for cell wall biosynthesis. This is Glutamate racemase from Synechococcus sp. (strain CC9605).